The primary structure comprises 906 residues: Protein translocase subunit SecA (906 aa).

ATP contacts are provided by residues Gln89, 107–111 (GEGKT), and Asp502. The Zn(2+) site is built by Cys890, Cys892, Cys901, and His902.

Belongs to the SecA family. As to quaternary structure, monomer and homodimer. Part of the essential Sec protein translocation apparatus which comprises SecA, SecYEG and auxiliary proteins SecDF-YajC and YidC. Zn(2+) serves as cofactor.

Its subcellular location is the cell inner membrane. It is found in the cytoplasm. The catalysed reaction is ATP + H2O + cellular proteinSide 1 = ADP + phosphate + cellular proteinSide 2.. Its function is as follows. Part of the Sec protein translocase complex. Interacts with the SecYEG preprotein conducting channel. Has a central role in coupling the hydrolysis of ATP to the transfer of proteins into and across the cell membrane, serving both as a receptor for the preprotein-SecB complex and as an ATP-driven molecular motor driving the stepwise translocation of polypeptide chains across the membrane. In Brucella suis biovar 1 (strain 1330), this protein is Protein translocase subunit SecA.